A 407-amino-acid polypeptide reads, in one-letter code: Tryptophan synthase beta chain (407 aa).

Residue K91 is modified to N6-(pyridoxal phosphate)lysine.

Belongs to the TrpB family. As to quaternary structure, tetramer of two alpha and two beta chains. Requires pyridoxal 5'-phosphate as cofactor.

The catalysed reaction is (1S,2R)-1-C-(indol-3-yl)glycerol 3-phosphate + L-serine = D-glyceraldehyde 3-phosphate + L-tryptophan + H2O. It functions in the pathway amino-acid biosynthesis; L-tryptophan biosynthesis; L-tryptophan from chorismate: step 5/5. The beta subunit is responsible for the synthesis of L-tryptophan from indole and L-serine. The polypeptide is Tryptophan synthase beta chain (Streptococcus pneumoniae (strain Hungary19A-6)).